We begin with the raw amino-acid sequence, 141 residues long: Single-stranded DNA-binding protein 2 (141 aa).

Positions 1–104 (MLNRTVLVGR…VVADSVQFLE (104 aa)) constitute an SSB domain. The disordered stretch occupies residues 104-141 (EPKNNNQQQNNNYQQQRQTQTGNNPFDNNADSIEDLPF). Low complexity predominate over residues 107 to 127 (NNNQQQNNNYQQQRQTQTGNN).

Homotetramer.

In Staphylococcus aureus (strain Mu50 / ATCC 700699), this protein is Single-stranded DNA-binding protein 2 (ssb-p).